Consider the following 305-residue polypeptide: UDP-3-O-acyl-N-acetylglucosamine deacetylase (305 aa).

Zn(2+) contacts are provided by His-79, His-238, and Asp-242. Catalysis depends on His-265, which acts as the Proton donor.

It belongs to the LpxC family. Zn(2+) serves as cofactor.

It carries out the reaction a UDP-3-O-[(3R)-3-hydroxyacyl]-N-acetyl-alpha-D-glucosamine + H2O = a UDP-3-O-[(3R)-3-hydroxyacyl]-alpha-D-glucosamine + acetate. The protein operates within glycolipid biosynthesis; lipid IV(A) biosynthesis; lipid IV(A) from (3R)-3-hydroxytetradecanoyl-[acyl-carrier-protein] and UDP-N-acetyl-alpha-D-glucosamine: step 2/6. Its function is as follows. Catalyzes the hydrolysis of UDP-3-O-myristoyl-N-acetylglucosamine to form UDP-3-O-myristoylglucosamine and acetate, the committed step in lipid A biosynthesis. The chain is UDP-3-O-acyl-N-acetylglucosamine deacetylase from Mannheimia succiniciproducens (strain KCTC 0769BP / MBEL55E).